We begin with the raw amino-acid sequence, 254 residues long: MGRGRVQLKRIENKINRQVTFSKRRAGLLKKAHEISVLCDAEVALVVFSHKGKLFEYSTDSCMEKILERYERYSYAERQLIAPESDVNTNWSMEYNRLKAKIELLERNQRHYLGEDLQAMSSKELQNLEQQLDTALKHIRSRKNQLMHDSINELQRKEKAIQEQNSMLSKQIKEREKILRAQQEQWDQQNHGHNMPPPPPPQQIQHPYMLSHQPSPFLNMGGLYQEEDPMEMRRNDLDLSLEPVYNCNLGCFAA.

Residues 3–57 (RGRVQLKRIENKINRQVTFSKRRAGLLKKAHEISVLCDAEVALVVFSHKGKLFEY) form the MADS-box domain. Residues 88–178 (NTNWSMEYNR…SKQIKEREKI (91 aa)) form the K-box domain.

The protein localises to the nucleus. In terms of biological role, controls floral meristem identity. Is also required for normal development of sepals and petals. Is required for the transition of an influorescence meristem into a floral meristem. Interacts with LEAFY. This is Floral homeotic protein APETALA 1 (AP1) from Sinapis alba (White mustard).